The primary structure comprises 688 residues: Translation initiation factor IF-2 (688 aa).

Basic and acidic residues-rich tracts occupy residues Gly53–Glu62 and Lys86–Asn95. Positions Gly53–Glu100 are disordered. The region spanning Lys187–Glu354 is the tr-type G domain. A G1 region spans residues Gly196 to Thr203. Residue Gly196–Thr203 participates in GTP binding. Residues Gly221–His225 are G2. The G3 stretch occupies residues Asp242–Gly245. GTP contacts are provided by residues Asp242–His246 and Asn296–Asp299. The segment at Asn296 to Asp299 is G4. Residues Ser332 to His334 are G5.

This sequence belongs to the TRAFAC class translation factor GTPase superfamily. Classic translation factor GTPase family. IF-2 subfamily.

The protein localises to the cytoplasm. Functionally, one of the essential components for the initiation of protein synthesis. Protects formylmethionyl-tRNA from spontaneous hydrolysis and promotes its binding to the 30S ribosomal subunits. Also involved in the hydrolysis of GTP during the formation of the 70S ribosomal complex. The protein is Translation initiation factor IF-2 of Clostridium botulinum (strain Loch Maree / Type A3).